The primary structure comprises 314 residues: Deoxymugineic acid synthase 1 (314 aa).

Aspartate 44 is a binding site for NADP(+). Tyrosine 49 functions as the Proton donor in the catalytic mechanism. Histidine 112 provides a ligand contact to substrate. NADP(+) is bound by residues 158-159 (CN), glutamine 180, 258-266 (FDEGRMKEN), and 273-281 (ELSEEERQR).

This sequence belongs to the aldo/keto reductase family.

The catalysed reaction is 2'-deoxymugineate + NAD(+) = 3''-deamino-3''-oxonicotianamine + NADH + H(+). The enzyme catalyses 2'-deoxymugineate + NADP(+) = 3''-deamino-3''-oxonicotianamine + NADPH + H(+). It participates in siderophore biosynthesis. In terms of biological role, catalyzes the reduction of a 3''-keto intermediate during the biosynthesis of 2'-deoxymugineic acid (DMA) from L-Met. Involved in the formation of phytosiderophores (MAs) belonging to the mugineic acid family and required to acquire iron. The sequence is that of Deoxymugineic acid synthase 1 from Zea mays (Maize).